The sequence spans 230 residues: Ribosome-recycling factor, mitochondrial (230 aa).

A mitochondrion-targeting transit peptide spans 1 to 24 (MILTTARLNCRPVTVPRLFNRSFS).

Belongs to the RRF family.

Its subcellular location is the mitochondrion. In terms of biological role, necessary for protein synthesis in mitochondria. Functions as a ribosome recycling factor in mitochondria. This is Ribosome-recycling factor, mitochondrial (RRF1) from Saccharomyces cerevisiae (strain ATCC 204508 / S288c) (Baker's yeast).